A 465-amino-acid polypeptide reads, in one-letter code: MISNGIGTVTTGKRSMCLFPLLLIGLWGCVTCHRSPVEDICTAKPRDIPVNPMCIYRSPEKKATEGEGSEQKIPGATNRRVWELSKANSHFATAFYQHLADSKNNNDNIFLSPLSISTAFAMTKLGACNNTLKQLMEVFKFDTISEKTSDQIHFFFAKLNCRLYRKANKSSELVSANRLFGDKSITFNETYQDISEVVYGAKLQPLDFKGNAEQSRLTINQWISNKTEGRITDVIPPQAIDEFTVLVLVNTIYFKGLWKSKFSPENTKKELFYKADGESCSVPMMYQEGKFRYRRVAEGTQVLELPFKGDDITMVLILPKLEKPLAKVERELTPDMLQEWLDELTETLLVVHMPHFRIEDSFSVKEQLQDMGLEDLFSPEKSRLPGIVAEGRNDLYVSDAFHKAFLEVNEEGSEAAASTVISIAGRSLNLNRVTFQANRPFLVLIREVALNTIIFMGRVANPCVN.

A signal peptide spans 1-32; the sequence is MISNGIGTVTTGKRSMCLFPLLLIGLWGCVTC. 2 disulfide bridges follow: cysteine 41–cysteine 161 and cysteine 54–cysteine 128. Threonine 64 is subject to Phosphothreonine. Serine 69 is subject to Phosphoserine. Tryptophan 82 is a binding site for heparin. Residue asparagine 129 is glycosylated (N-linked (GlcNAc...) asparagine). Residue arginine 162 participates in heparin binding. The N-linked (GlcNAc...) asparagine glycan is linked to asparagine 168. Arginine 178 is a binding site for heparin. N-linked (GlcNAc...) asparagine glycosylation is found at asparagine 188 and asparagine 225. Cysteine 280 and cysteine 463 are oxidised to a cystine.

Belongs to the serpin family. As to quaternary structure, forms protease inhibiting heterodimer with TMPRSS7. Post-translationally, phosphorylated by FAM20C in the extracellular medium. Plasma.

The protein localises to the secreted. It is found in the extracellular space. In terms of biological role, most important serine protease inhibitor in plasma that regulates the blood coagulation cascade. AT-III inhibits thrombin, matriptase-3/TMPRSS7, as well as factors IXa, Xa and XIa. Its inhibitory activity is greatly enhanced in the presence of heparin. The sequence is that of Antithrombin-III (SERPINC1) from Ovis aries (Sheep).